A 732-amino-acid polypeptide reads, in one-letter code: MKSVKIMGTMPPSISLAKAHERISQHWQNPVGELNIGGKRYRIIDNQVLRLNPHSGFSLFREGVGKIFSGKMFNFSIARNLTDTLHAAQKTTSQELRSDIPNALSNLFGAKPQTELPLGWKGEPLSGAPDLEGMRVAETDKFAEGESHISIIETKDKQRLVAKIERSIAEGHLFAELEAYKHIYKTAGKHPNLANVHGMAVVPYGNRKEEALLMDEVDGWRCSDTLRTLADSWKQGKINSEAYWGTIKFIAHRLLDVTNHLAKAGVVHNDIKPGNVVFDRASGEPVVIDLGLHSRSGEQPKGFTESFKAPELGVGNLGASEKSDVFLVVSTLLHCIEGFEKNPEIKPNQGLRFITSEPAHVMDENGYPIHRPGIAGVETAYTRFITDILGVSADSRPDSNEARLHEFLSDGTIDEESAKQILKDTLTGEMSPLSTDVRRITPKKLRELSDLLRTHLSSAATKQLDMGGVLSDLDTMLVALDKAEREGGVDKDQLKSFNSLILKTYRVIEDYVKGREGDTKNSSTEVSPYHRSNFMLSIVEPSLQRIQKHLDQTHSFSDIGSLVRAHKHLETLLEVLVTLSQQGQPVSSETYGFLNRLAEAKITLSQQLNTLQQQQESAKAQLSILINRSGSWADVARQSLQRFDSTRPVVKFGTEQYTAIHRQMMAAHAAITLQEVSEFTDDMRNFTVDSIPLLIQLGRSSLMDEHLVEQREKLRELTTIAERLNRLEREWM.

The 273-residue stretch at 136–408 (VAETDKFAEG…SNEARLHEFL (273 aa)) folds into the Protein kinase domain. ATP is bound by residues 142 to 150 (FAEGESHIS) and lysine 163. The Proton acceptor role is filled by aspartate 270.

Belongs to the protein kinase superfamily. Ser/Thr protein kinase family.

The protein localises to the secreted. The enzyme catalyses L-seryl-[protein] + ATP = O-phospho-L-seryl-[protein] + ADP + H(+). It carries out the reaction L-threonyl-[protein] + ATP = O-phospho-L-threonyl-[protein] + ADP + H(+). Its function is as follows. Acts as a virulence determinant. This is Protein kinase YpkA (ypkA) from Yersinia pseudotuberculosis serotype I (strain IP32953).